The sequence spans 26 residues: Glycyl-poneratoxin (26 aa).

R25 is subject to Arginine amide; in delta-paraponeritoxin-Pc1a.

The glycine-PoTx is a non-amidated form of poneratoxin, with an extra-Gly at C-terminus. This loss of amidation does not alter toxin activity on Nav1.7/SCN9A. Expressed by the venom gland.

The protein resides in the secreted. Toxin that causes pain in vertebrates by targeting tetrodotoxin (TTX)-sensitive sodium channels in peripheral sensory neurons. Also blocks synaptic transmission and stimulates smooth muscle contraction. Converts the normally rapidly activating and inactivating sodium channel current into one that does not inactivate. Is active on both Nav1.6/SCN8A and Nav1.7/SCN9A sodium channels, with a much potent activity on Nav1.6/SCN8A (EC(50)=97 nM on human channels) than on Nav1.7/SCN9A (EC(50)=2.3 uM on human and EC(50)=1.8 uM on mouse channels). On these channels, causes a sustained current, a reduction in peak current amplitude and a hyperpolarising shift. Modulates Nav1.7/SCN9A in a non-competitive manner with TTX or tetracaine. Toxin-induced persistant current is very slowly reversible with repeated wash steps over 30 minutes. In vivo, shallow intraplantar injection in mice causes immediate, long-lasting and near-maximal nocifensive behaviors, which decrease with coinjection of TTX. When tested on insects, causes paralysis but not mortality at high doses. This is Glycyl-poneratoxin from Paraponera clavata (Bullet ant).